Consider the following 95-residue polypeptide: Stationary phase-expressed protein 1 (95 aa).

The helical transmembrane segment at 20–38 (FRYIMLGLVGAAVVPTAYM) threads the bilayer.

It localises to the mitochondrion membrane. The sequence is that of Stationary phase-expressed protein 1 (SPG1) from Saccharomyces cerevisiae (strain RM11-1a) (Baker's yeast).